The primary structure comprises 107 residues: Phosphoribosyl-ATP pyrophosphatase (107 aa).

Belongs to the PRA-PH family.

Its subcellular location is the cytoplasm. It catalyses the reaction 1-(5-phospho-beta-D-ribosyl)-ATP + H2O = 1-(5-phospho-beta-D-ribosyl)-5'-AMP + diphosphate + H(+). It participates in amino-acid biosynthesis; L-histidine biosynthesis; L-histidine from 5-phospho-alpha-D-ribose 1-diphosphate: step 2/9. This is Phosphoribosyl-ATP pyrophosphatase from Methylobacterium nodulans (strain LMG 21967 / CNCM I-2342 / ORS 2060).